Reading from the N-terminus, the 435-residue chain is Cell adhesion molecule 2 (435 aa).

A signal peptide spans 1-24; it reads MIWKRSAVLRFYSVCGLLLQGSQG. Residues 25-367 are Extracellular-facing; sequence QFPLTQNVTV…SLAGQNGPDH (343 aa). The Ig-like V-type domain occupies 27–119; sequence PLTQNVTVVE…PVKTSKAYLT (93 aa). Residues Asn-31 and Asn-51 are each glycosylated (N-linked (GlcNAc...) asparagine). Disulfide bonds link Cys-44–Cys-104, Cys-146–Cys-203, and Cys-248–Cys-296. Ig-like C2-type domains lie at 127 to 219 and 227 to 312; these read PQIS…VAMQ and PSVK…YVLI. Residue Asn-291 is glycosylated (N-linked (GlcNAc...) asparagine). Low complexity predominate over residues 337-351; that stretch reads SVTITTSPSTSASSS. The tract at residues 337–360 is disordered; the sequence is SVTITTSPSTSASSSSRRDPNSLA. The chain crosses the membrane as a helical span at residues 368 to 388; sequence ALIGGIVAVVVFVTLCSIFLL. At 389–435 the chain is on the cytoplasmic side; that stretch reads GRYLARHKGTYLTNEAKGAEDAPDADTAIINAEGSQVNAEEKKEYFI. Ser-423 bears the Phosphoserine mark.

This sequence belongs to the nectin family. Glycosylation at Asn-51 reduces adhesive binding.

It localises to the cell membrane. It is found in the synapse. Its subcellular location is the cell projection. The protein resides in the axon. In terms of biological role, adhesion molecule that engages in homo- and heterophilic interactions with the other nectin-like family members, leading to cell aggregation. Important for synapse organization, providing regulated trans-synaptic adhesion. Preferentially binds to oligodendrocytes. The chain is Cell adhesion molecule 2 (Cadm2) from Mus musculus (Mouse).